The primary structure comprises 486 residues: UDP-N-acetylmuramate--L-alanine ligase (486 aa).

123–129 (GTHGKTT) is an ATP binding site.

This sequence belongs to the MurCDEF family.

The protein localises to the cytoplasm. It carries out the reaction UDP-N-acetyl-alpha-D-muramate + L-alanine + ATP = UDP-N-acetyl-alpha-D-muramoyl-L-alanine + ADP + phosphate + H(+). The protein operates within cell wall biogenesis; peptidoglycan biosynthesis. Its function is as follows. Cell wall formation. This is UDP-N-acetylmuramate--L-alanine ligase from Pseudomonas syringae pv. syringae (strain B728a).